Consider the following 287-residue polypeptide: Ribosomal RNA small subunit methyltransferase A (287 aa).

Residues N28, L30, G55, E77, D103, and N123 each contribute to the S-adenosyl-L-methionine site.

Belongs to the class I-like SAM-binding methyltransferase superfamily. rRNA adenine N(6)-methyltransferase family. RsmA subfamily.

Its subcellular location is the cytoplasm. It catalyses the reaction adenosine(1518)/adenosine(1519) in 16S rRNA + 4 S-adenosyl-L-methionine = N(6)-dimethyladenosine(1518)/N(6)-dimethyladenosine(1519) in 16S rRNA + 4 S-adenosyl-L-homocysteine + 4 H(+). Specifically dimethylates two adjacent adenosines (A1518 and A1519) in the loop of a conserved hairpin near the 3'-end of 16S rRNA in the 30S particle. May play a critical role in biogenesis of 30S subunits. The polypeptide is Ribosomal RNA small subunit methyltransferase A (Rhodopseudomonas palustris (strain HaA2)).